Reading from the N-terminus, the 687-residue chain is Adhesion G-protein coupled receptor G1 (687 aa).

Positions 1 to 25 (MTAQSLLQTTLFLLSLLFLVQGAHG) are cleaved as a signal peptide. 26–33 (RGHREDFR) provides a ligand contact to heparin. At 26–402 (RGHREDFRFC…VEVDAVHKHY (377 aa)) the chain is on the extracellular side. Cystine bridges form between Cys35–Cys91 and Cys121–Cys177. Asn39, Asn148, and Asn171 each carry an N-linked (GlcNAc...) asparagine glycan. 190–200 (LKHPQKASRRP) lines the heparin pocket. The 172-residue stretch at 224-395 (DTVSFEEDRI…AVLMVSSVEV (172 aa)) folds into the GAIN-B domain. N-linked (GlcNAc...) asparagine glycans are attached at residues Asn234, Asn303, Asn324, and Asn341. 2 disulfide bridges follow: Cys346–Cys377 and Cys366–Cys379. The tract at residues 346–395 (CVFWVEDPTLSSPGHWSSAGCETVRRETQTSCFCNHLTYFAVLMVSSVEV) is GPS. Residues 384–397 (YFAVLMVSSVEVDA) are stachel. A helical membrane pass occupies residues 403–423 (LSLLSYVGCVVSALACIVTIA). Residues 424 to 442 (AYLCSRRKPRDYTIKVHMN) lie on the Cytoplasmic side of the membrane. A helical membrane pass occupies residues 443 to 463 (LLLAVFLLDTSFLLSEPVALT). Residues 464–470 (GSEAGCR) lie on the Extracellular side of the membrane. Residues 471–491 (ASAIFLHFSLLACLSWMGLEG) form a helical membrane-spanning segment. The Cytoplasmic portion of the chain corresponds to 492–512 (YNLYRLVVEVFGTYVPGYLLK). A helical transmembrane segment spans residues 513 to 533 (LSAMGWGFPIFLVTLVALVDV). Topologically, residues 534 to 570 (DNYGPIILAVHRTPEGVIYPSMCWIRDSLVSYITNLG) are extracellular. The chain crosses the membrane as a helical span at residues 571–591 (LFSLVFLFNMAMLATMVVQIL). At 592-603 (RLRPHTQKWSHV) the chain is on the cytoplasmic side. A helical membrane pass occupies residues 604–624 (LTLLGLSLVLGLPWALIFFSF). Residues 625–630 (ASGTFQ) lie on the Extracellular side of the membrane. The chain crosses the membrane as a helical span at residues 631–651 (LVVLYLFSIITSFQGFLIFIW). Residues 652-687 (YWSMRLQARGGPSPLKSNSDSARLPISSGSTSSSRI) are Cytoplasmic-facing. The segment at 664-687 (SPLKSNSDSARLPISSGSTSSSRI) is disordered. A compositionally biased stretch (low complexity) spans 678-687 (SSGSTSSSRI).

Belongs to the G-protein coupled receptor 2 family. LN-TM7 subfamily. As to quaternary structure, heterodimer of 2 chains generated by proteolytic processing; the large extracellular N-terminal fragment (ADGRG1 NT) and the membrane-bound C-terminal fragment (ADGRG1-CT) predominantly remain associated and non-covalently linked. ADGRG1 NT self-associates in a trans-trans manner; the homophilic interaction enhances receptor signaling. Interacts with TGM2. Interacts with heparin; leading to the reduction of ADGRG1 shedding. Interacts with COL3A1. Part of a GPCR-tetraspanin complex at least consisting of ADGRG1, CD81, eventually CD9, and GNA11 in which CD81 is enhancing the association of ADGRG1 with GNA11. In terms of processing, autoproteolytically cleaved into 2 fragments; the large extracellular N-terminal fragment (ADGRG1 NT) and the membrane-bound C-terminal fragment (ADGRG1 CT) predominantly remain associated and non-covalently linked. Shedding to yield the secreted ADGRG1 N-terminal fragment seems to involve metalloprotease(s). Ubiquitinated. Undergoes polyubiquitination upon activation.

The protein resides in the cell membrane. It localises to the secreted. Its subcellular location is the membrane raft. Its activity is regulated as follows. Forms a heterodimer of 2 chains generated by proteolytic processing that remain associated through non-covalent interactions mediated by the GAIN-B domain. In the inactivated receptor, the Stachel sequence (also named stalk) is embedded in the GAIN-B domain, where it adopts a beta-strand conformation. On activation, the Stachel moves into the 7 transmembrane region and adopts a twisted hook-shaped configuration that forms contacts within the receptor, leading to coupling of a G-alpha protein, which activates signaling. The cleaved GAIN-B and N-terminal domains can then dissociate from the rest of the receptor. Adhesion G-protein coupled receptor (aGPCR) for steroid hormone 17alpha-hydroxypregnenolone (17-OH), which is involved in cell adhesion and cell-cell interactions. Ligand binding causes a conformation change that triggers signaling via guanine nucleotide-binding proteins (G proteins) and modulates the activity of downstream effectors, such as RhoA pathway. ADGRG1 is coupled to G(12) and/or G(13) G proteins (GNA12 and GNA13, respectively) and mediates the activation Rho small GTPases. Acts as a potent suppressor of ferroptosis: binding to 17-OH-binding initiates signaling that down-regulates CD36 and alleviates ferroptosis-induced liver injury. Ligand-binding also induces cell adhesion activity via association with proteins such as collagen III/COL3A1 and TGM2. Mediates cell matrix adhesion in developing neurons and hematopoietic stem cells. Involved in cortical development, specifically in maintenance of the pial basement membrane integrity and in cortical lamination: association with COL3A1 in the developing brain inhibits neuronal migration via activation of the RhoA pathway. Together with TGM2, acts as a regulator of myelination and myelin repair in oligodendrocyte precursor cells. Acts as a hemostatic sensor of shear force: G protein-coupled receptor signaling is activated in response to shear force in platelets, promoting G(13) G protein signaling, and platelet shape change and aggregation in a COL3A1-dependent manner. Acts as an inhibitor of VEGFA production thereby inhibiting angiogenesis through a signaling pathway mediated by PRKCA. Plays a role in the maintenance of hematopoietic stem cells in bone marrow niche. Plays an essential role in testis development. This chain is Adhesion G-protein coupled receptor G1 (ADGRG1), found in Gorilla gorilla gorilla (Western lowland gorilla).